The following is a 1680-amino-acid chain: MLTSPEPKGLVPFTAESLELIKNHIAKKCNEEHEEEDLKPSWGLEAGKKLPFAYGTLPQGTVSEPLEDVDPYYYVKRNTFMVLNRNRVIFRFNAVSILCTLSPLSSLRRAVIKVLVHPLFRLLILISVLTDSILMCMSNLPEWILAVENTLLGIYTFEILVKVIARGIWAGSFSFLGDLWNWLDFSVTLFELITRSSPLSSLPMFKTIRTLRILKIIPLNHGLQSIVVTLVQCLKKLLGAIALALFFLTVSSLFGMGLFMGNLKHKCVRWPQEDGNDVMYNGTGSQYHILERENFYYMEGARYALLCGNKTDAGLCPEGYMCVKEGSNPDNGFTSFDNFGWALLAMFRLMTQDYPELLYHQILYASGKIYMIFFVLISFWFAFYMASLFLGILTMAYEQEKQRASEESRDMDSKCHQTVKEFEEEHEGAEMETTQIEMKKRSPTSINTTLDILEDTALGHKEEPETSRKECPLCWYKFTKTCFIWKCSPCWIKLNEFADRIITHPLFDLFLVICIILNICFLALEHFPMSEELMSLLAIGNLVFIGIYTIEMILKIIAMHPYGYFQISWHIFDSILVVLGLTEMLLADIEEITVFILVPLIFIKLGKYAPPFKNLMRILGRALVALKDLVLLVSIFIYFSAVFGMKLFGRSYKDCVCHVDQDCQRQRWHMSDFLHAYVTVFRILCGEWIETLWECMEVAGEAWCIPFYMMVILIGNLLILYLFVALVSSFASYDATTEVSKEAKNLQLAVAWIKMVINCVLLKILCKEKTVSTEATDQTCDPSVKENISGHTLSELSNTQTFLRYKDQSSGTEKTPVTESESQSLIASPSVSETVPIASGESDIENLDNKETRSKSANGSSKEKMKQSSSSECSTVDIAISEEEEMVYEHEKSKLHKNGYERKSSAGQVSRESRNGKIWRNIRKTCCKIVENSWFECFIGLVTLLCTGTLALEDIYIDQRKTIKIFLEYGDMIFAYIFILEMLLKWVAYGFKAYFSNNWYKLDFMVVIVLCLSLIGKTREDLNPLASIKFLRALRVLSQFERMKVVLRALIKTTLPAVSVFLVCLMIWLLFSVMGVFLFAGKFYECIDPTRGERFSVFEVMNKSQCENLVFNESMPWENAKLNFDNVGNGFLSLFQVATFNGWISIMNSAIDSVGVYMQPSFEHSLHMYTYFIIFVVFGLFLPLCMLIGVIIRNFNKQKIKQGGSNIFITVKQKKQYRALKKLLYADSQKPAARPRNKFQGFICDVVTHRVFNVIIILLICFQATTIMIQNDEQSPQIETAVFWMNSLFTMLFTLECILKLTAFRCHYFTSAWNVHDFMVVVFSITGLLLPLSIGQYFVPPSLVQLLLLSRIIHVLRPGKGPKVFHDLMLPLMLSLPALLNIALLIFLVMFIYAIFGMYNFAYVKKEAGINDVSNFETFGSSMLCLFQVTTFSGWDGMLDAIFNSQWSDCDPDKINPGTQVRGDCGSPSVGIFYFVSYILISWLIIVNMYVVLIMEFLSIPSKRKNRTLSEDDFRRFFKVWNRFDPDRTQYIDSTKLSDFAAALDPPLFMAKPNKGQLVAMDLPMAAGDRIHCLDILLAFTKRVMGKDERVEKILSEIESGFMLANPFKITYEPITTTLKRKQEAVSATIIQRAYKSYRLRQSDKKIQDIPEIDDGREDPNSKGVHSGQIEEKASIQTQI.

Residues 1 to 117 (MLTSPEPKGL…RRAVIKVLVH (117 aa)) lie on the Cytoplasmic side of the membrane. An I repeat occupies 100–401 (TLSPLSSLRR…ILTMAYEQEK (302 aa)). A helical transmembrane segment spans residues 118–137 (PLFRLLILISVLTDSILMCM). The Extracellular segment spans residues 138–141 (SNLP). Residues 142-167 (EWILAVENTLLGIYTFEILVKVIARG) form a helical membrane-spanning segment. The Cytoplasmic segment spans residues 168–178 (IWAGSFSFLGD). A helical membrane pass occupies residues 179–196 (LWNWLDFSVTLFELITRS). At 197–200 (SPLS) the chain is on the extracellular side. The chain crosses the membrane as a helical span at residues 201–219 (SLPMFKTIRTLRILKIIPL). At 220–237 (NHGLQSIVVTLVQCLKKL) the chain is on the cytoplasmic side. A helical transmembrane segment spans residues 238 to 259 (LGAIALALFFLTVSSLFGMGLF). The Extracellular portion of the chain corresponds to 260-338 (MGNLKHKCVR…PDNGFTSFDN (79 aa)). An intrachain disulfide couples C267 to C307. N281 and N309 each carry an N-linked (GlcNAc...) asparagine glycan. The pore-forming intramembrane region spans 339–366 (FGWALLAMFRLMTQDYPELLYHQILYAS). G367 is a topological domain (extracellular). Residues 368 to 407 (KIYMIFFVLISFWFAFYMASLFLGILTMAYEQEKQRASEE) traverse the membrane as a helical segment. Residues 408–505 (SRDMDSKCHQ…EFADRIITHP (98 aa)) are Cytoplasmic-facing. The II repeat unit spans residues 487-756 (CSPCWIKLNE…QLAVAWIKMV (270 aa)). The helical transmembrane segment at 506–521 (LFDLFLVICIILNICF) threads the bilayer. The Extracellular segment spans residues 522–530 (LALEHFPMS). A helical membrane pass occupies residues 531 to 559 (EELMSLLAIGNLVFIGIYTIEMILKIIAM). Topologically, residues 560–568 (HPYGYFQIS) are cytoplasmic. Residues 569–586 (WHIFDSILVVLGLTEMLL) traverse the membrane as a helical segment. Topologically, residues 587–592 (ADIEEI) are extracellular. A helical transmembrane segment spans residues 593-608 (TVFILVPLIFIKLGKY). At 609–625 (APPFKNLMRILGRALVA) the chain is on the cytoplasmic side. A helical membrane pass occupies residues 626–654 (LKDLVLLVSIFIYFSAVFGMKLFGRSYKD). Topologically, residues 655 to 672 (CVCHVDQDCQRQRWHMSD) are extracellular. 2 cysteine pairs are disulfide-bonded: C657–C663 and C695–C704. The segment at residues 673 to 699 (FLHAYVTVFRILCGEWIETLWECMEVA) is an intramembrane region (pore-forming). Residue G700 is a topological domain, extracellular. The helical transmembrane segment at 701 to 731 (EAWCIPFYMMVILIGNLLILYLFVALVSSFA) threads the bilayer. Over 732–933 (SYDATTEVSK…KTCCKIVENS (202 aa)) the chain is Cytoplasmic. The span at 807–833 (DQSSGTEKTPVTESESQSLIASPSVSE) shows a compositional bias: polar residues. Positions 807–874 (DQSSGTEKTP…MKQSSSSECS (68 aa)) are disordered. S842 is modified (phosphoserine). One copy of the III repeat lies at 915–1223 (NGKIWRNIRK…KKQYRALKKL (309 aa)). Residues 934-952 (WFECFIGLVTLLCTGTLAL) traverse the membrane as a helical segment. The Extracellular portion of the chain corresponds to 953–960 (EDIYIDQR). Residues 961–989 (KTIKIFLEYGDMIFAYIFILEMLLKWVAY) form a helical membrane-spanning segment. Residues 990–997 (GFKAYFSN) are Cytoplasmic-facing. Residues 998–1019 (NWYKLDFMVVIVLCLSLIGKTR) form a helical membrane-spanning segment. E1020 is a topological domain (extracellular). A helical transmembrane segment spans residues 1021-1039 (DLNPLASIKFLRALRVLSQ). The Cytoplasmic portion of the chain corresponds to 1040–1054 (FERMKVVLRALIKTT). A helical transmembrane segment spans residues 1055–1079 (LPAVSVFLVCLMIWLLFSVMGVFLF). The Extracellular segment spans residues 1080–1126 (AGKFYECIDPTRGERFSVFEVMNKSQCENLVFNESMPWENAKLNFDN). C1086 and C1106 form a disulfide bridge. N-linked (GlcNAc...) asparagine glycosylation is found at N1102 and N1112. Positions 1127–1153 (VGNGFLSLFQVATFNGWISIMNSAIDS) form an intramembrane region, pore-forming. Residues 1154–1166 (VGVYMQPSFEHSL) lie on the Extracellular side of the membrane. A helical transmembrane segment spans residues 1167 to 1201 (HMYTYFIIFVVFGLFLPLCMLIGVIIRNFNKQKIK). Residues 1202–1249 (QGGSNIFITVKQKKQYRALKKLLYADSQKPAARPRNKFQGFICDVVTH) lie on the Cytoplasmic side of the membrane. An IV repeat occupies 1232–1530 (AARPRNKFQG…WNRFDPDRTQ (299 aa)). Residues 1250–1271 (RVFNVIIILLICFQATTIMIQN) traverse the membrane as a helical segment. The Extracellular portion of the chain corresponds to 1272–1275 (DEQS). A helical membrane pass occupies residues 1276 to 1304 (PQIETAVFWMNSLFTMLFTLECILKLTAF). Residues 1305 to 1311 (RCHYFTS) lie on the Cytoplasmic side of the membrane. Residues 1312–1337 (AWNVHDFMVVVFSITGLLLPLSIGQY) traverse the membrane as a helical segment. At 1338-1340 (FVP) the chain is on the extracellular side. The helical transmembrane segment at 1341–1361 (PSLVQLLLLSRIIHVLRPGKG) threads the bilayer. Topologically, residues 1362 to 1376 (PKVFHDLMLPLMLSL) are cytoplasmic. Residues 1377 to 1401 (PALLNIALLIFLVMFIYAIFGMYNF) traverse the membrane as a helical segment. The Extracellular segment spans residues 1402–1419 (AYVKKEAGINDVSNFETF). An intramembrane region (pore-forming) is located at residues 1420–1443 (GSSMLCLFQVTTFSGWDGMLDAIF). Residues 1444–1467 (NSQWSDCDPDKINPGTQVRGDCGS) lie on the Extracellular side of the membrane. An intrachain disulfide couples C1450 to C1465. Residues 1468–1503 (PSVGIFYFVSYILISWLIIVNMYVVLIMEFLSIPSK) form a helical membrane-spanning segment. At 1504-1680 (RKNRTLSEDD…EEKASIQTQI (177 aa)) the chain is on the cytoplasmic side. The segment at 1646-1680 (KIQDIPEIDDGREDPNSKGVHSGQIEEKASIQTQI) is disordered.

The protein belongs to the sodium channel (TC 1.A.1.10) family. SCN7A subfamily. As to quaternary structure, the sodium channel formed by SCN7A is probably a heterooligomeric complex consisting of the ion conducting pore forming alpha subunit SCN7A and regulatory beta subunits such as SCN3B. Interacts with ATP1A1; activates ATP1A1 and thereby indirectly signals to nearby neurons to regulate sodium homeostasis. Not tissue specific but widely expressed.

The protein localises to the cell membrane. The enzyme catalyses Na(+)(in) = Na(+)(out). Its function is as follows. Sodium leak channel functioning as an osmosensor regulating sodium ion levels in various tissues and organs. While most sodium channels are voltage-gated, SCN7A is not and lets sodium flow through membrane along its concentration gradient. In glial cells of the central nervous system, senses body-fluid sodium levels and controls salt intake behavior as well as voluntary water intake through activation of nearby neurons to maintain appropriate sodium levels in the body. By mediating sodium influx into keratinocytes, also plays a role in skin barrier homeostasis. The sequence is that of Sodium channel protein type 7 subunit alpha from Rattus norvegicus (Rat).